Reading from the N-terminus, the 381-residue chain is Prostatic acid phosphatase (381 aa).

Positions 1 to 31 are cleaved as a signal peptide; the sequence is MRAVPLPLSRTASLSLGFLLLLSLCLDPGQA. R42 is a substrate binding site. H43 (nucleophile) is an active-site residue. R46 is a binding site for substrate. N93 is a glycosylation site (N-linked (GlcNAc...) asparagine). Position 110 (R110) interacts with substrate. Disulfide bonds link C160–C371, C214–C312, and C346–C350. N219 is a glycosylation site (N-linked (GlcNAc...) asparagine). Residue H288 participates in substrate binding. D289 (proton donor) is an active-site residue. An N-linked (GlcNAc...) asparagine glycan is attached at N332.

It belongs to the histidine acid phosphatase family. In terms of assembly, homodimer; dimer formation is required for phosphatase activity. Expressed in salivary gland, thymus and thyroid gland. As to expression, widely expressed in prostate lobes, brain, kidney, liver, lung, muscle, placenta, salivary gland, spleen, thyroid and thymus. Locates to Schwann cells and fibroblasts. Expressed in peptidergic and non-peptidergic nociceptive (pain-sensing) neurons. Preferentially expressed in non-peptidergic doral root ganglia neurons.

It is found in the secreted. It localises to the cell membrane. Its subcellular location is the lysosome membrane. The catalysed reaction is a phosphate monoester + H2O = an alcohol + phosphate. The enzyme catalyses a ribonucleoside 5'-phosphate + H2O = a ribonucleoside + phosphate. It carries out the reaction 1-(9Z-octadecenoyl)-sn-glycero-3-phosphate + H2O = 1-(9Z-octadecenoyl)-sn-glycerol + phosphate. It catalyses the reaction O-phospho-L-tyrosyl-[protein] + H2O = L-tyrosyl-[protein] + phosphate. Functionally, a non-specific tyrosine phosphatase that dephosphorylates a diverse number of substrates under acidic conditions (pH 4-6) including alkyl, aryl, and acyl orthophosphate monoesters and phosphorylated proteins. Has lipid phosphatase activity and inactivates lysophosphatidic acid in seminal plasma. Its function is as follows. In addition to its tyrosine phosphatase activity, also has ecto-5'-nucleotidase activity in dorsal root ganglion (DRG) neurons. Generates adenosine from AMP. This extracellular adenosine leads to a decrease in chronic pain by activating A1R in nociceptive neurons. The chain is Prostatic acid phosphatase (Acp3) from Mus musculus (Mouse).